The chain runs to 331 residues: L-lactate dehydrogenase A chain (331 aa).

Residues 29–57 and arginine 98 contribute to the NAD(+) site; that span reads GMVG…MEDK. Arginine 105, asparagine 137, and arginine 168 together coordinate substrate. Residue asparagine 137 coordinates NAD(+). Histidine 192 (proton acceptor) is an active-site residue. A substrate-binding site is contributed by threonine 247.

It belongs to the LDH/MDH superfamily. LDH family. In terms of assembly, homotetramer.

The protein resides in the cytoplasm. The enzyme catalyses (S)-lactate + NAD(+) = pyruvate + NADH + H(+). The protein operates within fermentation; pyruvate fermentation to lactate; (S)-lactate from pyruvate: step 1/1. In terms of biological role, interconverts simultaneously and stereospecifically pyruvate and lactate with concomitant interconversion of NADH and NAD(+). This is L-lactate dehydrogenase A chain (ldha) from Champsocephalus gunnari (Mackerel icefish).